Consider the following 475-residue polypeptide: Amino acid permease 8 (475 aa).

Residues 1-22 are disordered; it reads MDAYNNPSAVESGDAAVKSVDD. Residues 1–31 lie on the Cytoplasmic side of the membrane; that stretch reads MDAYNNPSAVESGDAAVKSVDDDGREKRTGT. A run of 2 helical transmembrane segments spans residues 32 to 52 and 53 to 73; these read FWTA…LSLA and WAIA…FAII. At 74–120 the chain is on the cytoplasmic side; sequence TYYTSTLLADCYRSPDSITGTRNYNYMGVVRSYLGGKKVQLCGVAQY. A helical transmembrane segment spans residues 121–141; it reads VNLVGVTIGYTITASISLVAI. The Extracellular portion of the chain corresponds to 142–157; that stretch reads GKSNCYHDKGHKAKCS. Residues 158–178 form a helical membrane-spanning segment; it reads VSNYPYMAAFGIVQIILSQLP. Residues 179–185 are Cytoplasmic-facing; it reads NFHKLSF. Residues 186–206 form a helical membrane-spanning segment; the sequence is LSIIAAVMSFSYASIGIGLAI. The Extracellular segment spans residues 207 to 236; the sequence is ATVASGKIGKTELTGTVIGVDVTASEKVWK. A helical transmembrane segment spans residues 237-257; the sequence is LFQAIGDIAFSYAFTTILIEI. At 258 to 276 the chain is on the cytoplasmic side; that stretch reads QDTLRSSPPENKVMKRASL. Residues 277–297 traverse the membrane as a helical segment; the sequence is VGVSTTTVFYILCGCIGYAAF. Residues 298-314 lie on the Extracellular side of the membrane; it reads GNQAPGDFLTDFGFYEP. Residues 315-335 traverse the membrane as a helical segment; sequence YWLIDFANACIALHLIGAYQV. Residues 336–378 lie on the Cytoplasmic side of the membrane; it reads YAQPFFQFVEENCNKKWPQSNFINKEYSSKVPLLGKCRVNLFR. Residues 379–398 traverse the membrane as a helical segment; the sequence is LVWRTCYVVLTTFVAMIFPF. At 399–401 the chain is on the extracellular side; that stretch reads FNA. Residues 402–424 form a helical membrane-spanning segment; that stretch reads ILGLLGAFAFWPLTVYFPVAMHI. At 425-441 the chain is on the cytoplasmic side; it reads AQAKVKKYSRRWLALNL. Residues 442-462 traverse the membrane as a helical segment; that stretch reads LVLVCLIVSALAAVGSIIGLI. The Extracellular portion of the chain corresponds to 463-475; it reads NSVKSYKPFKNLD.

The protein belongs to the amino acid/polyamine transporter 2 family. Amino acid/auxin permease (AAAP) (TC 2.A.18.2) subfamily. As to expression, expressed in flower buds, siliques, developing seeds and funiculi.

The protein localises to the cell membrane. Its function is as follows. Amino acid-proton symporter. Stereospecific transporter with a broad specificity for glutamate, aspartate and neutral and acidic amino acids. This is Amino acid permease 8 (AAP8) from Arabidopsis thaliana (Mouse-ear cress).